Reading from the N-terminus, the 245-residue chain is Endonuclease III (245 aa).

The region spanning 119–138 is the HhH domain; sequence MVDLFTLPGVGRKTANVILG. The [4Fe-4S] cluster site is built by C198, C205, C208, and C214.

Belongs to the Nth/MutY family. It depends on [4Fe-4S] cluster as a cofactor.

It carries out the reaction 2'-deoxyribonucleotide-(2'-deoxyribose 5'-phosphate)-2'-deoxyribonucleotide-DNA = a 3'-end 2'-deoxyribonucleotide-(2,3-dehydro-2,3-deoxyribose 5'-phosphate)-DNA + a 5'-end 5'-phospho-2'-deoxyribonucleoside-DNA + H(+). Its function is as follows. DNA repair enzyme that has both DNA N-glycosylase activity and AP-lyase activity. The DNA N-glycosylase activity releases various damaged pyrimidines from DNA by cleaving the N-glycosidic bond, leaving an AP (apurinic/apyrimidinic) site. The AP-lyase activity cleaves the phosphodiester bond 3' to the AP site by a beta-elimination, leaving a 3'-terminal unsaturated sugar and a product with a terminal 5'-phosphate. The protein is Endonuclease III of Mycobacterium leprae (strain TN).